The primary structure comprises 126 residues: Basic phospholipase A2 1 (126 aa).

The propeptide occupies 1 to 7 (SNRPMPL). Disulfide bonds link Cys18–Cys78, Cys33–Cys125, Cys35–Cys51, Cys50–Cys106, Cys57–Cys99, Cys67–Cys92, and Cys85–Cys97. Residues Tyr34, Gly36, and Gly38 each coordinate Ca(2+). His54 is an active-site residue. Asp55 lines the Ca(2+) pocket. The active site involves Asp100.

Belongs to the phospholipase A2 family. Group I subfamily. D49 sub-subfamily. In terms of assembly, heterodimer formed between two homologous isoforms: isoform 1 and isoform 2. Requires Ca(2+) as cofactor. Expressed by the venom gland.

The protein localises to the secreted. The enzyme catalyses a 1,2-diacyl-sn-glycero-3-phosphocholine + H2O = a 1-acyl-sn-glycero-3-phosphocholine + a fatty acid + H(+). In terms of biological role, PLA2 catalyzes the calcium-dependent hydrolysis of the 2-acyl groups in 3-sn-phosphoglycerides. The chain is Basic phospholipase A2 1 from Naja sagittifera (Andaman cobra).